The following is a 417-amino-acid chain: Phosphoglycerate kinase 1 (417 aa).

Residue Ser2 is modified to N-acetylserine. 2 positions are modified to phosphoserine: Ser2 and Ser4. The residue at position 6 (Lys6) is an N6-succinyllysine. N6-acetyllysine is present on Lys11. The (2R)-3-phosphoglycerate site is built by Val23, Asp24, Phe25, Asn26, Gln38, and Arg39. Positions 38-43 (QRIKAA) are mitochondrial targeting region exposed following cis-trans isomerization by PIN1 and recognized by the TOM complex for mitochondrial translocation of the protein. The residue at position 48 (Lys48) is an N6-acetyllysine; alternate. Position 48 is an N6-succinyllysine; alternate (Lys48). Positions 62, 63, 65, and 66 each coordinate (2R)-3-phosphoglycerate. Lys75 bears the N6-acetyllysine mark. Tyr76 carries the post-translational modification Phosphotyrosine. Residues Lys86 and Lys91 each carry the N6-acetyllysine modification. Lys97 is subject to N6-acetyllysine; alternate. Lys97 bears the N6-(2-hydroxyisobutyryl)lysine; alternate mark. 2 residues coordinate (2R)-3-phosphoglycerate: Leu122 and Arg123. The residue at position 131 (Lys131) is an N6-acetyllysine; alternate. Lys131 carries the post-translational modification N6-malonyllysine; alternate. N6-acetyllysine is present on Lys146. Residues His170 and Arg171 each contribute to the (2R)-3-phosphoglycerate site. The residue at position 191 (Lys191) is an N6-succinyllysine. The residue at position 196 (Tyr196) is a Phosphotyrosine. Lys199 bears the N6-acetyllysine mark. Residue Ser203 is modified to Phosphoserine. Gly214 serves as a coordination point for ADP. Position 214 (Gly214) interacts with CDP. Residues Ala215 and Lys216 each contribute to the AMP site. ATP is bound at residue Ala215. Residue Ala215 participates in Mg(2+) binding. Lys216 bears the N6-(2-hydroxyisobutyryl)lysine mark. Mg(2+)-binding residues include Ala218 and Asp219. Asp219 is a CDP binding site. Lys220 is a binding site for AMP. Lys220 lines the ATP pocket. N6-(2-hydroxyisobutyryl)lysine is present on Lys220. Gly238 lines the ADP pocket. Gly238 contacts CDP. Gly239 lines the AMP pocket. Residue Gly239 coordinates ATP. Residues Lys267 and Lys291 each carry the N6-acetyllysine modification. Gly313 provides a ligand contact to AMP. ATP is bound at residue Gly313. Lys323 is subject to N6-(2-hydroxyisobutyryl)lysine. CDP contacts are provided by Gly338, Val340, and Phe343. Phe343 is a binding site for ADP. Residue Glu344 coordinates AMP. Glu344 lines the ATP pocket. Lys361 is subject to N6-acetyllysine. Asp375 and Thr376 together coordinate ATP. Asp375 serves as a coordination point for Mg(2+).

The protein belongs to the phosphoglycerate kinase family. In terms of assembly, monomer. Interacts with kinase MAPK1/ERK2; the interaction is direct, occurs under hypoxic conditions, and promotes its interaction with PIN1. Interacts with peptidyl-prolyl cis-trans isomerase PIN1; the interaction is direct, occurs under hypoxic conditions, and targets the protein to the mitochondrion by promoting interactions with the TOM complex. Interacts with mitochondrial circRNA mcPGK1 (via its 2nd stem-loop); the interaction is direct and targets the protein to the mitochondrion by promoting interactions with the TOM complex. Interacts with pyruvate dehydrogenase kinase PDK1; the interaction is direct, occurs under hypoxic conditions and leads to PDK1-mediated inhibition of pyruvate dehydrogenase complex activity. Mg(2+) is required as a cofactor. Post-translationally, phosphorylated at Ser-203 by MAPK1/ERK2 under hypoxic conditions, which promotes its mitochondrial targeting.

The protein localises to the cytoplasm. It localises to the cytosol. Its subcellular location is the mitochondrion matrix. It catalyses the reaction (2R)-3-phosphoglycerate + ATP = (2R)-3-phospho-glyceroyl phosphate + ADP. It carries out the reaction L-seryl-[protein] + ATP = O-phospho-L-seryl-[protein] + ADP + H(+). The protein operates within carbohydrate degradation; glycolysis; pyruvate from D-glyceraldehyde 3-phosphate: step 2/5. Catalyzes one of the two ATP producing reactions in the glycolytic pathway via the reversible conversion of 1,3-diphosphoglycerate to 3-phosphoglycerate. Both L- and D- forms of purine and pyrimidine nucleotides can be used as substrates, but the activity is much lower on pyrimidines. In addition to its role as a glycolytic enzyme, it seems that PGK-1 acts as a polymerase alpha cofactor protein (primer recognition protein). Acts as a protein kinase when localized to the mitochondrion where it phosphorylates pyruvate dehydrogenase kinase PDK1 to inhibit pyruvate dehydrogenase complex activity and suppress the formation of acetyl-coenzyme A from pyruvate, and consequently inhibit oxidative phosphorylation and promote glycolysis. May play a role in sperm motility. In Sus scrofa (Pig), this protein is Phosphoglycerate kinase 1 (PGK1).